Here is a 68-residue protein sequence, read N- to C-terminus: UPF0435 protein SAOUHSC_02093 (68 aa).

This sequence belongs to the UPF0435 family.

The polypeptide is UPF0435 protein SAOUHSC_02093 (Staphylococcus aureus (strain NCTC 8325 / PS 47)).